The chain runs to 389 residues: Inner membrane transport protein YdhP (389 aa).

Topologically, residues 1–6 (MKINYP) are cytoplasmic. The chain crosses the membrane as a helical span at residues 7 to 27 (LLALAIGAFGIGTTEFSPMGL). Over 28-43 (LPVIARGVDVSIPAAG) the chain is Periplasmic. The chain crosses the membrane as a helical span at residues 44–64 (MLISAYAVGVMVGAPLMTLLL). The Cytoplasmic segment spans residues 65–70 (SHRARR). A helical membrane pass occupies residues 71–91 (SALIFLMAIFTLGNVLSAIAP). Over 92-100 (DYMTLMLSR) the chain is Periplasmic. A helical transmembrane segment spans residues 101–121 (ILTSLNHGAFFGLGSVVAASV). The Cytoplasmic segment spans residues 122-130 (VPKHKQASA). Residues 131–151 (VATMFMGLTLANIGGVPAATW) form a helical membrane-spanning segment. Residues 152–159 (LGETIGWR) lie on the Periplasmic side of the membrane. A helical transmembrane segment spans residues 160–180 (MSFLATAGLGVISMVSLFFSL). Topologically, residues 181-203 (PKGGAGARPEVKKELAVLMRPQV) are cytoplasmic. A helical transmembrane segment spans residues 204 to 224 (LSALLTTVLGAGAMFTLYTYI). Residues 225–236 (SPVLQSITHATP) lie on the Periplasmic side of the membrane. Residues 237 to 257 (VFVTAMLVLIGVGFSIGNYLG) traverse the membrane as a helical segment. Residues 258–266 (GKLADRSVN) are Cytoplasmic-facing. A helical membrane pass occupies residues 267–287 (GTLKGFLLLLMVIMLAIPFLA). Over 288-290 (RNE) the chain is Periplasmic. Residues 291-311 (FGAAISMVVWGAATFAVVPPL) traverse the membrane as a helical segment. Residues 312 to 330 (QMRVMRVASEAPGLSSSVN) lie on the Cytoplasmic side of the membrane. Residues 331 to 351 (IGAFNLGNALGAAAGGAVISA) traverse the membrane as a helical segment. Topologically, residues 352 to 356 (GLGYS) are periplasmic. Residues 357–377 (FVPVMGAIVAGLALLLVFMSA) traverse the membrane as a helical segment. Residues 378–389 (RKQPETVCVANS) lie on the Cytoplasmic side of the membrane.

The protein belongs to the major facilitator superfamily.

The protein localises to the cell inner membrane. This Escherichia coli (strain K12) protein is Inner membrane transport protein YdhP (ydhP).